A 29-amino-acid chain; its full sequence is Cyclotide mech-3 (29 aa).

Positions 1–29 (GLPTCGETCTLGKCNTPKCTCNWPICYKN) form a cross-link, cyclopeptide (Gly-Asn). 3 disulfides stabilise this stretch: Cys-5/Cys-19, Cys-9/Cys-21, and Cys-14/Cys-26.

In terms of processing, this is a cyclic peptide. Post-translationally, contains 3 disulfide bonds.

Its function is as follows. Probably participates in a plant defense mechanism (Potential). Binds to and induces leakage in phospholipd membranes, particularly ones containing 1-palmitoyl-2-oleophosphatidylethanolamine (POPE). In vitro, displays cytotoxicity against cultured cells but no hemolytic activity towards fresh erythrocytes. The protein is Cyclotide mech-3 of Melicytus chathamicus (Chatham Island mahoe).